Consider the following 167-residue polypeptide: MNYTSFIFAFQLCIILCSSGYYCQAMFFKEIEELKGYFNASNPDVADGGSLFVDILKNWKEESDKTIIQSQIVSFYLKMFENLKDDDQRIQRSMDTIKEDMLDKLLNTSSSKRDDFLKLIQIPVNDLQVQRKAINELFKVMNDLSPRSNLRKRKRSQNLFRGRRASK.

Residues 1–23 (MNYTSFIFAFQLCIILCSSGYYC) form the signal peptide. Q24 bears the Pyrrolidone carboxylic acid mark. N-linked (GlcNAc...) asparagine glycans are attached at residues N39 and N107.

The protein belongs to the type II (or gamma) interferon family. Homodimer. Interacts with IFNGR1 (via extracellular domain); this interaction promotes IFNGR1 dimerization. As to expression, released primarily from activated T lymphocytes.

It is found in the secreted. Its function is as follows. Type II interferon produced by immune cells such as T-cells and NK cells that plays crucial roles in antimicrobial, antiviral, and antitumor responses by activating effector immune cells and enhancing antigen presentation. Primarily signals through the JAK-STAT pathway after interaction with its receptor IFNGR1 to affect gene regulation. Upon IFNG binding, IFNGR1 intracellular domain opens out to allow association of downstream signaling components JAK2, JAK1 and STAT1, leading to STAT1 activation, nuclear translocation and transcription of IFNG-regulated genes. Many of the induced genes are transcription factors such as IRF1 that are able to further drive regulation of a next wave of transcription. Plays a role in class I antigen presentation pathway by inducing a replacement of catalytic proteasome subunits with immunoproteasome subunits. In turn, increases the quantity, quality, and repertoire of peptides for class I MHC loading. Increases the efficiency of peptide generation also by inducing the expression of activator PA28 that associates with the proteasome and alters its proteolytic cleavage preference. Up-regulates as well MHC II complexes on the cell surface by promoting expression of several key molecules such as cathepsins B/CTSB, H/CTSH, and L/CTSL. Participates in the regulation of hematopoietic stem cells during development and under homeostatic conditions by affecting their development, quiescence, and differentiation. The sequence is that of Interferon gamma (IFNG) from Felis catus (Cat).